Consider the following 203-residue polypeptide: Peptidyl-tRNA hydrolase (203 aa).

Residue Y16 participates in tRNA binding. H21 serves as the catalytic Proton acceptor. Residues Y68, N70, and N116 each coordinate tRNA.

Belongs to the PTH family. As to quaternary structure, monomer.

Its subcellular location is the cytoplasm. The catalysed reaction is an N-acyl-L-alpha-aminoacyl-tRNA + H2O = an N-acyl-L-amino acid + a tRNA + H(+). Its function is as follows. Hydrolyzes ribosome-free peptidyl-tRNAs (with 1 or more amino acids incorporated), which drop off the ribosome during protein synthesis, or as a result of ribosome stalling. Catalyzes the release of premature peptidyl moieties from peptidyl-tRNA molecules trapped in stalled 50S ribosomal subunits, and thus maintains levels of free tRNAs and 50S ribosomes. The polypeptide is Peptidyl-tRNA hydrolase (Nostoc sp. (strain PCC 7120 / SAG 25.82 / UTEX 2576)).